The primary structure comprises 29 residues: Augerpeptide hheTx2 (29 aa).

Contains 4 disulfide bonds. Expressed by the venom duct.

The protein resides in the secreted. This is Augerpeptide hheTx2 from Hastula hectica (Sea snail).